We begin with the raw amino-acid sequence, 98 residues long: MQRSRGFRSKSRRKMTKVVREGRSNPITNKLQKFEEGDLVHITINPSIQKGQPHPRFHGKTGKITDKKGKAYIVSLTDGNKAKELIIRPDHLKLQTSQ.

A compositionally biased stretch (basic residues) spans M1–K17. The interval M1–T28 is disordered.

This sequence belongs to the eukaryotic ribosomal protein eL21 family.

The protein is Large ribosomal subunit protein eL21 of Methanobrevibacter smithii (strain ATCC 35061 / DSM 861 / OCM 144 / PS).